Reading from the N-terminus, the 117-residue chain is Large ribosomal subunit protein eL34 (117 aa).

This sequence belongs to the eukaryotic ribosomal protein eL34 family. In terms of assembly, component of the large ribosomal subunit.

Its subcellular location is the cytoplasm. The protein localises to the cytosol. It localises to the endoplasmic reticulum. Functionally, component of the large ribosomal subunit. The ribosome is a large ribonucleoprotein complex responsible for the synthesis of proteins in the cell. This is Large ribosomal subunit protein eL34 (rpl34) from Danio rerio (Zebrafish).